The sequence spans 516 residues: Probable rhamnogalacturonase B (516 aa).

A signal peptide spans 1 to 21 (MRLHAFTLLSLLGLVPSFAAA). A disulfide bond links Cys42 and Cys68. Residue Asn145 is glycosylated (N-linked (GlcNAc...) asparagine). Catalysis depends on Asp219, which acts as the Proton donor. Cys221 and Cys238 form a disulfide bridge. A glycan (N-linked (GlcNAc...) asparagine) is linked at Asn239. His294 is an active-site residue. Residue Asn321 is glycosylated (N-linked (GlcNAc...) asparagine). 2 disulfide bridges follow: Cys344–Cys350 and Cys372–Cys381. The tract at residues 462 to 516 (ETPAAASRSEQVVQGASQETSQPAPESAGPVRSVPTGGNRPSRHRHGHHHFWIAA) is disordered. Polar residues predominate over residues 469 to 485 (RSEQVVQGASQETSQPA). A compositionally biased stretch (basic residues) spans 502–516 (PSRHRHGHHHFWIAA).

The protein belongs to the glycosyl hydrolase 28 family.

It localises to the secreted. It catalyses the reaction Endohydrolysis of alpha-D-GalA-(1-&gt;2)-alpha-L-Rha glycosidic bond in the rhamnogalacturonan I backbone with initial inversion of anomeric configuration releasing oligosaccharides with beta-D-GalA at the reducing end.. Its function is as follows. Pectinolytic enzymes consist of four classes of enzymes: pectine lyase, polygalacturonase, pectin methylesterase and rhamnogalacturonase. Hydrolyzes alpha-D-galacturonopyranosyl-(1,2)-alpha-L-rhamnopyranosyl linkages in the backbone of the hairy regions of pectins. The chain is Probable rhamnogalacturonase B (rhgB) from Neosartorya fischeri (strain ATCC 1020 / DSM 3700 / CBS 544.65 / FGSC A1164 / JCM 1740 / NRRL 181 / WB 181) (Aspergillus fischerianus).